A 349-amino-acid chain; its full sequence is Isopentenyl-diphosphate delta-isomerase (349 aa).

12–13 (RK) is a substrate binding site. Residues 69–71 (GMT), Ser99, and Asn128 contribute to the FMN site. A substrate-binding site is contributed by Gln158. Glu159 lines the Mg(2+) pocket. FMN-binding positions include Lys189, Ser214, Thr219, 265–267 (GIR), and 286–287 (SG).

This sequence belongs to the IPP isomerase type 2 family. Homooctamer. Dimer of tetramers. It depends on FMN as a cofactor. NADPH serves as cofactor. The cofactor is Mg(2+).

Its subcellular location is the cytoplasm. The catalysed reaction is isopentenyl diphosphate = dimethylallyl diphosphate. Involved in the biosynthesis of isoprenoids. Catalyzes the 1,3-allylic rearrangement of the homoallylic substrate isopentenyl (IPP) to its allylic isomer, dimethylallyl diphosphate (DMAPP). The sequence is that of Isopentenyl-diphosphate delta-isomerase from Latilactobacillus sakei subsp. sakei (strain 23K) (Lactobacillus sakei subsp. sakei).